Here is a 376-residue protein sequence, read N- to C-terminus: Dihydroorotate dehydrogenase (quinone) (376 aa).

Residues 74–78 and Thr-98 contribute to the FMN site; that span reads AGFDK. Substrate is bound at residue Lys-78. 123–127 serves as a coordination point for substrate; that stretch reads NRMGF. 2 residues coordinate FMN: Asn-155 and Asn-188. Substrate is bound at residue Asn-188. The active-site Nucleophile is the Ser-191. Asn-193 provides a ligand contact to substrate. Positions 226 and 254 each coordinate FMN. 255 to 256 lines the substrate pocket; that stretch reads NT. FMN-binding positions include Gly-284, Gly-313, and 334 to 335; that span reads YT.

This sequence belongs to the dihydroorotate dehydrogenase family. Type 2 subfamily. Monomer. FMN is required as a cofactor.

Its subcellular location is the cell membrane. The enzyme catalyses (S)-dihydroorotate + a quinone = orotate + a quinol. It participates in pyrimidine metabolism; UMP biosynthesis via de novo pathway; orotate from (S)-dihydroorotate (quinone route): step 1/1. Functionally, catalyzes the conversion of dihydroorotate to orotate with quinone as electron acceptor. This chain is Dihydroorotate dehydrogenase (quinone), found in Nostoc punctiforme (strain ATCC 29133 / PCC 73102).